The following is a 222-amino-acid chain: MNVAILLAAGKGERMSENVPKQFLEIEGRMLFEYPLSTFLKSEAIDGVVIVTRREWFEVVEKRVFHEKVLGIVEGGDTRSQSVRSALEFLEKFSPSYVLVHDSARPFLRKKHVSEVLRRARETGAATLALKNSDALVRVENDRIEYIPRKGVYRILTPQAFSYEILKKAHENGGEWADDTEPVQKLGVKIALVEGDPLCFKVTFKEDLELARIIAREWERIP.

Belongs to the IspD/TarI cytidylyltransferase family. IspD subfamily.

The enzyme catalyses 2-C-methyl-D-erythritol 4-phosphate + CTP + H(+) = 4-CDP-2-C-methyl-D-erythritol + diphosphate. It participates in isoprenoid biosynthesis; isopentenyl diphosphate biosynthesis via DXP pathway; isopentenyl diphosphate from 1-deoxy-D-xylulose 5-phosphate: step 2/6. In terms of biological role, catalyzes the formation of 4-diphosphocytidyl-2-C-methyl-D-erythritol from CTP and 2-C-methyl-D-erythritol 4-phosphate (MEP). This is 2-C-methyl-D-erythritol 4-phosphate cytidylyltransferase from Thermotoga maritima (strain ATCC 43589 / DSM 3109 / JCM 10099 / NBRC 100826 / MSB8).